The chain runs to 105 residues: uncharacterized protein (105 aa).

A helical membrane pass occupies residues 4-26; that stretch reads TQILLILFVGILVTTPHDIFIII.

It localises to the membrane. This is an uncharacterized protein from Rickettsia conorii (strain ATCC VR-613 / Malish 7).